Reading from the N-terminus, the 286-residue chain is Cbb3-type cytochrome c oxidase subunit CcoP (286 aa).

2 helical membrane passes run 11-31 (FGLI…SSLI) and 62-82 (VGWI…FFFG). Cytochrome c domains follow at residues 116–195 (ELVD…MAEL) and 205–286 (QLID…LSNR). Residues C129, C132, H133, M174, C219, C222, H223, and M264 each contribute to the heme c site.

The protein belongs to the CcoP / FixP family. As to quaternary structure, component of the cbb3-type cytochrome c oxidase at least composed of CcoN, CcoO, CcoQ and CcoP. Heme c is required as a cofactor.

It is found in the cell inner membrane. It functions in the pathway energy metabolism; oxidative phosphorylation. In terms of biological role, C-type cytochrome. Part of the cbb3-type cytochrome c oxidase complex. CcoP subunit is required for transferring electrons from donor cytochrome c via its heme groups to CcoO subunit. From there, electrons are shuttled to the catalytic binuclear center of CcoN subunit where oxygen reduction takes place. The complex also functions as a proton pump. The chain is Cbb3-type cytochrome c oxidase subunit CcoP from Helicobacter pylori (strain ATCC 700392 / 26695) (Campylobacter pylori).